The sequence spans 249 residues: Inner membrane protein pE248R (249 aa).

Gly2 is lipidated: N-myristoyl glycine; by host. Residues 2-199 lie on the Cytoplasmic side of the membrane; it reads GGSTSKNSFK…ADAISAVFKN (198 aa). The chain crosses the membrane as a helical span at residues 200-220; it reads IMVAAVVIVVIIVGFIAVFYF. The Extracellular portion of the chain corresponds to 221 to 249; the sequence is LHSRHRHEEEEEAEPLITSKILKNAAVSQ.

It belongs to the asfivirus E248R family. Interacts with A151R.

It is found in the host membrane. The protein localises to the virion membrane. In terms of biological role, essential for viral fusion with host endosomal membrane and core release. The protein is Inner membrane protein pE248R of African swine fever virus (isolate Pig/Kenya/KEN-50/1950) (ASFV).